A 321-amino-acid polypeptide reads, in one-letter code: Porphobilinogen deaminase (321 aa).

Cys246 is modified (S-(dipyrrolylmethanemethyl)cysteine).

This sequence belongs to the HMBS family. As to quaternary structure, monomer. The cofactor is dipyrromethane.

It catalyses the reaction 4 porphobilinogen + H2O = hydroxymethylbilane + 4 NH4(+). It participates in porphyrin-containing compound metabolism; protoporphyrin-IX biosynthesis; coproporphyrinogen-III from 5-aminolevulinate: step 2/4. Tetrapolymerization of the monopyrrole PBG into the hydroxymethylbilane pre-uroporphyrinogen in several discrete steps. The polypeptide is Porphobilinogen deaminase (Helicobacter hepaticus (strain ATCC 51449 / 3B1)).